Reading from the N-terminus, the 134-residue chain is Translation initiation factor 5A (134 aa).

Lys-36 is subject to Hypusine.

It belongs to the eIF-5A family.

The protein resides in the cytoplasm. Its function is as follows. Functions by promoting the formation of the first peptide bond. This Korarchaeum cryptofilum (strain OPF8) protein is Translation initiation factor 5A (eIF5A).